The chain runs to 397 residues: MNAKIRKMLHNPAASGILIFLAAVAAMAVENSAWNTHYNAFLDIPVSVQFADLTIAKPLLLWINDGLMAVFFLLVGLELKREFLEGELSQPSNVILPVVGAVGGIALPAAIYTLINQGNPAALDGWAIPTATDIAFALGILALLGKRVPASLKLFLLTLAIIDDLAAILIIAFFYTSELSPASLMIAGSAIGTLILMNRLGVTGISGYMVVGIVLWIAVLKSGVHATLAGVVLGFVIPLKGEEPGELSPLHQLEDDLHHVVGLGILPLFAFANAGVSLQGLTPSILLDPVPLGIALGLFLGKQIGVFGFVWLSIKSGLAKLPEGFTWKQLYGVALLCGVGFTMSLFISSLAFEHGSSALVSGAPDMGSARLGILTGSILSGIFGYILLRFSLPKPPQ.

The next 11 helical transmembrane spans lie at 9–29 (LHNP…AMAV), 59–79 (LLLW…GLEL), 95–115 (ILPV…YTLI), 125–145 (GWAI…ALLG), 154–174 (LFLL…IAFF), 177–197 (SELS…LILM), 222–242 (SGVH…LKGE), 260–280 (VVGL…SLQG), 292–312 (LGIA…FVWL), 332–352 (GVAL…SLAF), and 371–391 (LGIL…LRFS).

This sequence belongs to the NhaA Na(+)/H(+) (TC 2.A.33) antiporter family.

The protein resides in the cell inner membrane. The catalysed reaction is Na(+)(in) + 2 H(+)(out) = Na(+)(out) + 2 H(+)(in). Functionally, na(+)/H(+) antiporter that extrudes sodium in exchange for external protons. This Magnetococcus marinus (strain ATCC BAA-1437 / JCM 17883 / MC-1) protein is Na(+)/H(+) antiporter NhaA 2.